The chain runs to 433 residues: Pyrimidine-nucleoside phosphorylase (433 aa).

81–83 (KHS) contributes to the phosphate binding site. K(+) contacts are provided by glycine 88 and threonine 90. Residues threonine 92, 108–110 (KMS), and threonine 120 contribute to the phosphate site. Residues arginine 168 and lysine 187 each contribute to the substrate site. K(+)-binding residues include leucine 243, alanine 246, and glutamate 255.

This sequence belongs to the thymidine/pyrimidine-nucleoside phosphorylase family. Homodimer. Requires K(+) as cofactor.

It carries out the reaction uridine + phosphate = alpha-D-ribose 1-phosphate + uracil. It catalyses the reaction thymidine + phosphate = 2-deoxy-alpha-D-ribose 1-phosphate + thymine. The catalysed reaction is 2'-deoxyuridine + phosphate = 2-deoxy-alpha-D-ribose 1-phosphate + uracil. Functionally, catalyzes phosphorolysis of the pyrimidine nucleosides uridine, thymidine and 2'-deoxyuridine with the formation of the corresponding pyrimidine base and ribose-1-phosphate. The protein is Pyrimidine-nucleoside phosphorylase (pdp) of Geobacillus stearothermophilus (Bacillus stearothermophilus).